The chain runs to 265 residues: Zinc transporter ZupT (265 aa).

The next 8 helical transmembrane spans lie at 6–26 (IAFA…GGAL), 37–57 (FMAA…FMEI), 77–97 (WTMM…DRLV), 122–142 (GMFT…ATFL), 150–170 (IAIP…IAVA), 184–204 (FWWA…GFAL), 208–228 (FIGP…MVFI), and 245–265 (CAIY…ALFI). Fe(2+) contacts are provided by N133 and E136. Zn(2+) is bound by residues E136 and H161. Residues N162, E165, and E194 each coordinate Fe(2+). E165 contributes to the Zn(2+) binding site.

Belongs to the ZIP transporter (TC 2.A.5) family. ZupT subfamily.

Its subcellular location is the cell membrane. It catalyses the reaction Zn(2+)(in) = Zn(2+)(out). Functionally, mediates zinc uptake. May also transport other divalent cations. This chain is Zinc transporter ZupT, found in Corynebacterium aurimucosum (strain ATCC 700975 / DSM 44827 / CIP 107346 / CN-1) (Corynebacterium nigricans).